We begin with the raw amino-acid sequence, 154 residues long: Protein X (154 aa).

The mitochondrial targeting sequence stretch occupies residues 68–117; that stretch reads PCALRFTSARYMETAMNTSHHLPRQLYKWTLGLFVMSTTGVEKYFKDCVF.

This sequence belongs to the orthohepadnavirus protein X family. As to quaternary structure, may form homodimer. May interact with host CEBPA, CFLAR, CREB1, DDB1, E4F1, HBXIP, HSPD1/HSP60, NFKBIA, POLR2E and SMAD4. Interacts with host SMC5-SMC6 complex and induces its degradation. Interacts with host TRPC4AP; leading to prevent ubiquitination of TRPC4AP. Interacts with host PLSCR1; this interaction promotes ubiquitination and degradation of HBx and impairs HBx-mediated cell proliferation. Post-translationally, a fraction may be phosphorylated in insect cells and HepG2 cells, a human hepatoblastoma cell line. Phosphorylated in vitro by host protein kinase C or mitogen-activated protein kinase. N-acetylated in insect cells.

It is found in the host cytoplasm. Its subcellular location is the host nucleus. It localises to the host mitochondrion. Its function is as follows. Multifunctional protein that plays a role in silencing host antiviral defenses and promoting viral transcription. Does not seem to be essential for HBV infection. May be directly involved in development of cirrhosis and liver cancer (hepatocellular carcinoma). Most of cytosolic activities involve modulation of cytosolic calcium. The effect on apoptosis is controversial depending on the cell types in which the studies have been conducted. May induce apoptosis by localizing in mitochondria and causing loss of mitochondrial membrane potential. May also modulate apoptosis by binding host CFLAR, a key regulator of the death-inducing signaling complex (DISC). Promotes viral transcription by using the host E3 ubiquitin ligase DDB1 to target the SMC5-SMC6 complex to proteasomal degradation. This host complex would otherwise bind to viral episomal DNA, and prevents its transcription. Moderately stimulates transcription of many different viral and cellular transcription elements. Promoters and enhancers stimulated by HBx contain DNA binding sites for NF-kappa-B, AP-1, AP-2, c-EBP, ATF/CREB, or the calcium-activated factor NF-AT. This is Protein X from Hepatitis B virus genotype G (isolate IG29227/2000) (HBV-G).